Here is a 369-residue protein sequence, read N- to C-terminus: Opsin Rh6 (369 aa).

Over 1-46 (MASLHPPSFAYMRDGRNLSLAESVPAEIMHMVDPYWYQWPPLEPMW) the chain is Extracellular. An N-linked (GlcNAc...) asparagine glycan is attached at Asn17. Residues 47 to 71 (FGIIGFVIAILGTMSLAGNFIVMYI) form a helical membrane-spanning segment. The Cytoplasmic segment spans residues 72 to 83 (FTSSKGLRTPSN). The helical transmembrane segment at 84 to 109 (MFVVNLAFSDFMMMFTMFPPVVLNGF) threads the bilayer. The Extracellular portion of the chain corresponds to 110–123 (YGTWIMGPFLCELY). A disulfide bridge connects residues Cys120 and Cys197. The helical transmembrane segment at 124–143 (GMFGSLFGCVSIWSMTLIAY) threads the bilayer. The Cytoplasmic portion of the chain corresponds to 144–162 (DRYCVIVKGMARKPLTATA). The chain crosses the membrane as a helical span at residues 163–186 (AVLRLMVVWTICGAWALMPLFGWN). Topologically, residues 187 to 210 (RYVPEGNMTACGTDYFAKDWWNRS) are extracellular. Residues Asn193 and Asn208 are each glycosylated (N-linked (GlcNAc...) asparagine). Residues 211 to 238 (YIIVYSLWVYLTPLLTIIFSYWHIMKAV) form a helical membrane-spanning segment. At 239–274 (AAHEKAMREQAKKMNVASLRNSEADKSKAIEIKLAK) the chain is on the cytoplasmic side. A helical transmembrane segment spans residues 275–298 (VALTTISLWFFAWTPYTIINYAGI). Topologically, residues 299–305 (FESMHLS) are extracellular. A helical transmembrane segment spans residues 306-330 (PLSTICGSVFAKANAVCNPIVYGLS). At Lys317 the chain carries N6-(retinylidene)lysine. At 331–369 (HPKYKQVLREKMPCLACGKDDLTSDSRTQATAEISESQA) the chain is on the cytoplasmic side.

The protein belongs to the G-protein coupled receptor 1 family. Opsin subfamily. In terms of processing, phosphorylated on some or all of the serine and threonine residues present in the C-terminal region. Each Drosophila eye is composed of 800 facets or ommatidia. Each ommatidium contains 8 photoreceptor cells (R1-R8), the R1 to R6 cells are outer cells, while R7 and R8 are inner cells. Rh6 is expressed in a subset of R8 cells, most likely expressed in the subset of R8 cells paired with Rh4-expressing R7 cells (R7y).

The protein resides in the membrane. Visual pigments are the light-absorbing molecules that mediate vision. They consist of an apoprotein, opsin, covalently linked to cis-retinal. In Drosophila melanogaster (Fruit fly), this protein is Opsin Rh6 (Rh6).